Consider the following 156-residue polypeptide: Ribosomal RNA large subunit methyltransferase H (156 aa).

Residues leucine 73, glycine 104, and leucine 123–leucine 128 contribute to the S-adenosyl-L-methionine site.

It belongs to the RNA methyltransferase RlmH family. In terms of assembly, homodimer.

It is found in the cytoplasm. It catalyses the reaction pseudouridine(1915) in 23S rRNA + S-adenosyl-L-methionine = N(3)-methylpseudouridine(1915) in 23S rRNA + S-adenosyl-L-homocysteine + H(+). Specifically methylates the pseudouridine at position 1915 (m3Psi1915) in 23S rRNA. The polypeptide is Ribosomal RNA large subunit methyltransferase H (Shewanella piezotolerans (strain WP3 / JCM 13877)).